A 109-amino-acid chain; its full sequence is Putative double-stranded DNA mimic protein YciU (109 aa).

The protein belongs to the putative dsDNA mimic protein family.

Functionally, may act as a double-stranded DNA (dsDNA) mimic. Probably regulates the activity of a dsDNA-binding protein. The protein is Putative double-stranded DNA mimic protein YciU of Salmonella choleraesuis (strain SC-B67).